The chain runs to 378 residues: Ribosomal RNA large subunit methyltransferase G (378 aa).

The protein belongs to the methyltransferase superfamily. RlmG family.

The protein resides in the cytoplasm. The catalysed reaction is guanosine(1835) in 23S rRNA + S-adenosyl-L-methionine = N(2)-methylguanosine(1835) in 23S rRNA + S-adenosyl-L-homocysteine + H(+). Functionally, specifically methylates the guanine in position 1835 (m2G1835) of 23S rRNA. The sequence is that of Ribosomal RNA large subunit methyltransferase G from Escherichia coli O9:H4 (strain HS).